Reading from the N-terminus, the 1046-residue chain is Translation initiation factor IF-2 (1046 aa).

A disordered region spans residues 49-450 (ALQQGNGGKA…GVMLPRGNGQ (402 aa)). 2 stretches are compositionally biased toward low complexity: residues 57–80 (KAAPRKAAPAKPGAPSPAQAARPA) and 89–106 (PAAAERPAAAERPAAAPA). Residues 107-128 (APGPRPGPKPAPRPAPAAPAPA) show a composition bias toward pro residues. Residues 129 to 169 (APEFTAPPSAPAAPAAAASGPRPGARPGAPKPGGARPATPG) are compositionally biased toward low complexity. Residues 177 to 194 (RGERTDRGDRGDRGDRQG) show a composition bias toward basic and acidic residues. The span at 195 to 214 (AARPGGQAPRPGARPAGPRP) shows a compositional bias: low complexity. 2 stretches are compositionally biased toward gly residues: residues 239–248 (PRPGGAGAPG) and 266–280 (GGPGGAPRPQGGPGG). The span at 302 to 318 (GNRPNPGMMPQRPAAGP) shows a compositional bias: low complexity. A compositionally biased stretch (gly residues) spans 319–414 (RPGGGGPGGR…GTQGAFGRPG (96 aa)). Residues 418-427 (RRGRKSKRQR) are compositionally biased toward basic residues. One can recognise a tr-type G domain in the interval 539–711 (ARPPVVTVMG…VVLTADASLD (173 aa)). The segment at 548 to 555 (GHVDHGKT) is G1. 548–555 (GHVDHGKT) is a GTP binding site. Positions 573–577 (GITQH) are G2. Residues 598–601 (DTPG) are G3. GTP-binding positions include 598 to 602 (DTPGH) and 652 to 655 (NKID). A G4 region spans residues 652–655 (NKID). Residues 688-690 (SAK) form a G5 region.

It belongs to the TRAFAC class translation factor GTPase superfamily. Classic translation factor GTPase family. IF-2 subfamily.

The protein localises to the cytoplasm. One of the essential components for the initiation of protein synthesis. Protects formylmethionyl-tRNA from spontaneous hydrolysis and promotes its binding to the 30S ribosomal subunits. Also involved in the hydrolysis of GTP during the formation of the 70S ribosomal complex. The protein is Translation initiation factor IF-2 of Streptomyces avermitilis (strain ATCC 31267 / DSM 46492 / JCM 5070 / NBRC 14893 / NCIMB 12804 / NRRL 8165 / MA-4680).